We begin with the raw amino-acid sequence, 472 residues long: Carboxypeptidase Q (472 aa).

A signal peptide spans 1–20; the sequence is MRFLFFLFVAVVHLFSLGSG. The propeptide occupies 21-44; the sequence is KAIYKSGVSQRTFQEIKEEIANYE. The N-linked (GlcNAc...) asparagine glycan is linked to asparagine 61. Zn(2+)-binding residues include histidine 290 and aspartate 302. The Nucleophile role is filled by glutamate 336. A Zn(2+)-binding site is contributed by glutamate 337. N-linked (GlcNAc...) asparagine glycosylation occurs at asparagine 353. Position 364 (aspartate 364) interacts with Zn(2+). Asparagine 396 carries N-linked (GlcNAc...) asparagine glycosylation. Histidine 434 serves as a coordination point for Zn(2+).

The protein belongs to the peptidase M28 family. As to quaternary structure, homodimer. The monomeric form is inactive while the homodimer is active. In terms of processing, N-glycosylated. The secreted form is modified by hybrid or complex type oligosaccharide chains.

The protein resides in the endoplasmic reticulum. It localises to the golgi apparatus. The protein localises to the lysosome. Its subcellular location is the secreted. In terms of biological role, carboxypeptidase that may play an important role in the hydrolysis of circulating peptides. Catalyzes the hydrolysis of dipeptides with unsubstituted terminals into amino acids. May play a role in the liberation of thyroxine hormone from its thyroglobulin (Tg) precursor. This is Carboxypeptidase Q (Cpq) from Rattus norvegicus (Rat).